The chain runs to 114 residues: Putative toxin HigB3 (114 aa).

It belongs to the mycobacterial HigB family.

In terms of biological role, putative toxic component of a type II toxin-antitoxin (TA) system. Its cognate antitoxin would be HigA3. Not toxic upon expression in M.smegmatis. In Mycobacterium tuberculosis (strain ATCC 25618 / H37Rv), this protein is Putative toxin HigB3.